Reading from the N-terminus, the 210-residue chain is HTH-type transcriptional repressor FabR (210 aa).

Residues 10 to 70 (KTRRSLVEAA…TMVDESGLML (61 aa)) enclose the HTH tetR-type domain. The H-T-H motif DNA-binding region spans 33–52 (SLREVAREAGIAPTSFYRHF).

In terms of assembly, homodimer.

The protein localises to the cytoplasm. Its function is as follows. Represses the transcription of fabB, involved in unsaturated fatty acid (UFA) biosynthesis. By controlling UFA production, FabR directly influences the physical properties of the membrane bilayer. In Citrobacter koseri (strain ATCC BAA-895 / CDC 4225-83 / SGSC4696), this protein is HTH-type transcriptional repressor FabR.